A 70-amino-acid chain; its full sequence is DNA-directed RNA polymerase subunit omega (70 aa).

It belongs to the RNA polymerase subunit omega family. As to quaternary structure, the RNAP catalytic core consists of 2 alpha, 1 beta, 1 beta' and 1 omega subunit. When a sigma factor is associated with the core the holoenzyme is formed, which can initiate transcription.

The enzyme catalyses RNA(n) + a ribonucleoside 5'-triphosphate = RNA(n+1) + diphosphate. Promotes RNA polymerase assembly. Latches the N- and C-terminal regions of the beta' subunit thereby facilitating its interaction with the beta and alpha subunits. This chain is DNA-directed RNA polymerase subunit omega, found in Clostridium perfringens (strain ATCC 13124 / DSM 756 / JCM 1290 / NCIMB 6125 / NCTC 8237 / Type A).